The sequence spans 284 residues: 4-diphosphocytidyl-2-C-methyl-D-erythritol kinase (284 aa).

Lysine 14 is a catalytic residue. Residue 98–108 (PMGGGLGGGSS) coordinates ATP. Residue aspartate 140 is part of the active site.

The protein belongs to the GHMP kinase family. IspE subfamily.

The enzyme catalyses 4-CDP-2-C-methyl-D-erythritol + ATP = 4-CDP-2-C-methyl-D-erythritol 2-phosphate + ADP + H(+). Its pathway is isoprenoid biosynthesis; isopentenyl diphosphate biosynthesis via DXP pathway; isopentenyl diphosphate from 1-deoxy-D-xylulose 5-phosphate: step 3/6. Functionally, catalyzes the phosphorylation of the position 2 hydroxy group of 4-diphosphocytidyl-2C-methyl-D-erythritol. The sequence is that of 4-diphosphocytidyl-2-C-methyl-D-erythritol kinase from Shewanella baltica (strain OS223).